The chain runs to 443 residues: KICSTOR complex protein ITFG2 (443 aa).

One copy of the FG-GAP 1; atypical repeat lies at 19 to 48 (FPHAICLGDVDNDALNELVVGDTSGKLSVY). Ser104 bears the Phosphoserine mark. One copy of the FG-GAP 2; atypical repeat lies at 125 to 154 (NTKVMLISDIDGDGCYELVVGYTDRVVRAF). Ser219 is modified (phosphoserine).

As to quaternary structure, part of the KICSTOR complex composed of KPTN, ITFG2, KICS2 and SZT2. SZT2 probably serves as a link between the other three proteins in the KICSTOR complex and may mediate the direct interaction with the GATOR complex via GATOR1. The KICSTOR complex interacts directly with the GATOR1 complex and most probably indirectly with the GATOR2 complex in an amino acid-independent manner.

It localises to the lysosome membrane. Its function is as follows. As part of the KICSTOR complex functions in the amino acid-sensing branch of the TORC1 signaling pathway. Recruits, in an amino acid-independent manner, the GATOR1 complex to the lysosomal membranes and allows its interaction with GATOR2 and the RAG GTPases. Functions upstream of the RAG GTPases and is required to negatively regulate mTORC1 signaling in absence of amino acids. In absence of the KICSTOR complex mTORC1 is constitutively localized to the lysosome and activated. The KICSTOR complex is also probably involved in the regulation of mTORC1 by glucose. The sequence is that of KICSTOR complex protein ITFG2 from Mus musculus (Mouse).